The following is a 476-amino-acid chain: MLRIFNTLTKKKEIFDFLLNKKINIYVCGVTTYDFCHIGHARTFIIFDIIIRYLQYLGYNTFYIRNITDIDDKIINKAKINNESIHILVNRMIKLMHKDFLSLNLIKPDQEPRVTQHISNIISSIKLLLKNNYAYVSDNKDILFKLNNFKEYGFLSNRMFNCSEKNFTTISKEKNYINNINDFVLWKHSNQLSIDTCTNWSSPWGAGRPGWHIECSSIINNFFKDGVVDIHGGGIDLLFPHHENEIAQLKSMNNSFSVNFWIHSGMVINKNHKMSKSFSNSVSIQYLLKKYDSEIIRWYFLATHYRHPLYYSEKNLLMMKNIFIKIYRSLLDCVVTINTKIDYEYHLRNKIKRKFFSAMNDDFNTPKACSILQKISKLIYKNKKNNTYLANILASDLVYLGKILGLFQNDPKNFFLKDNFCNKSTDLLIIVEKLFHMRNFYRSKKQWNLSDIIRKKLFCLGVIVEDNSYSSYYRFI.

Position 28 (cysteine 28) interacts with Zn(2+). A 'HIGH' region motif is present at residues 30–40; sequence VTTYDFCHIGH. Cysteine 215, histidine 241, and glutamate 245 together coordinate Zn(2+). The short motif at 273 to 277 is the 'KMSKS' region element; it reads KMSKS. Lysine 276 contacts ATP.

Belongs to the class-I aminoacyl-tRNA synthetase family. As to quaternary structure, monomer. The cofactor is Zn(2+).

It localises to the cytoplasm. The enzyme catalyses tRNA(Cys) + L-cysteine + ATP = L-cysteinyl-tRNA(Cys) + AMP + diphosphate. This chain is Cysteine--tRNA ligase, found in Buchnera aphidicola subsp. Cinara cedri (strain Cc).